Here is a 635-residue protein sequence, read N- to C-terminus: Probable monoacyl phosphatidylinositol tetramannoside-binding protein LpqW (635 aa).

Residues 1–26 (MGVPSPVRRVCVTVGALVALACMVLA) form the signal peptide. 3 disordered regions span residues 32–52 (PPPA…PRRP), 389–412 (NTSV…GPPE), and 511–551 (NAPT…LVKA). Composition is skewed to low complexity over residues 390 to 411 (TSVS…TGPP) and 511 to 531 (NAPT…APDT).

The protein belongs to the bacterial solute-binding protein 5 family.

The protein operates within phospholipid metabolism; phosphatidylinositol metabolism. In terms of biological role, may directly or indirectly regulate the accessibility of the key branch point intermediate, monoacyl phosphatidylinositol tetramannoside (AcPIM4), to the elongating alpha-1,6 mannosyltransferases which could regulate the lipoarabinomannans (LAMs) biosynthesis. The protein is Probable monoacyl phosphatidylinositol tetramannoside-binding protein LpqW (lpqW) of Mycobacterium tuberculosis (strain CDC 1551 / Oshkosh).